Consider the following 56-residue polypeptide: uncharacterized protein (56 aa).

The helical transmembrane segment at 12–32 (GITLFPYFAILILILAILVVG) threads the bilayer. The interval 19–31 (FAILILILAILVV) is hydrophobic.

Its subcellular location is the membrane. This is an uncharacterized protein from Chenopodium amaranticolor (Quinoa).